The chain runs to 100 residues: Large ribosomal subunit protein uL23 (100 aa).

It belongs to the universal ribosomal protein uL23 family. Part of the 50S ribosomal subunit. Contacts protein L29, and trigger factor when it is bound to the ribosome.

One of the early assembly proteins it binds 23S rRNA. One of the proteins that surrounds the polypeptide exit tunnel on the outside of the ribosome. Forms the main docking site for trigger factor binding to the ribosome. In Thermotoga neapolitana (strain ATCC 49049 / DSM 4359 / NBRC 107923 / NS-E), this protein is Large ribosomal subunit protein uL23.